The chain runs to 307 residues: Protoheme IX farnesyltransferase (307 aa).

A run of 8 helical transmembrane segments spans residues 38–58 (NTLTVFTGFWLALHFNGLSVL), 65–85 (FFTIVGSGLVMAGVCCLNNYI), 108–128 (PGFALTFGLVILLLGFVFLLL), 131–151 (PMAVLMGFIGAFTYVVLYSLW), 158–178 (LNTVVGSISGAVPPLIGWAAI), 186–206 (IAWMLFLIMFIWQIPHFLALA), 251–271 (LGITFMVIATLLNIGWIVLGF), and 287–307 (FVYSLNYLTILFVSMIVVTFF).

The protein belongs to the UbiA prenyltransferase family. Protoheme IX farnesyltransferase subfamily. As to quaternary structure, interacts with CtaA.

It is found in the cell membrane. The enzyme catalyses heme b + (2E,6E)-farnesyl diphosphate + H2O = Fe(II)-heme o + diphosphate. It participates in porphyrin-containing compound metabolism; heme O biosynthesis; heme O from protoheme: step 1/1. Its function is as follows. Converts heme B (protoheme IX) to heme O by substitution of the vinyl group on carbon 2 of heme B porphyrin ring with a hydroxyethyl farnesyl side group. This chain is Protoheme IX farnesyltransferase, found in Bacillus thuringiensis (strain Al Hakam).